A 241-amino-acid chain; its full sequence is Large ribosomal subunit protein uL3 (241 aa).

Disordered stretches follow at residues 139–164 and 215–241; these read VSHR…KMPG and DAPK…QEGA. Q151 is subject to N5-methylglutamine.

It belongs to the universal ribosomal protein uL3 family. In terms of assembly, part of the 50S ribosomal subunit. Forms a cluster with proteins L14 and L19. Methylated by PrmB.

In terms of biological role, one of the primary rRNA binding proteins, it binds directly near the 3'-end of the 23S rRNA, where it nucleates assembly of the 50S subunit. This chain is Large ribosomal subunit protein uL3, found in Rhodopseudomonas palustris (strain BisB5).